We begin with the raw amino-acid sequence, 211 residues long: NADH-quinone oxidoreductase subunit I (211 aa).

2 4Fe-4S ferredoxin-type domains span residues 90-119 (RLWESDTERCIGCGLCEKICISNCIRIDTK) and 129-158 (TEYSINLGRCIFCGYCAEVCPELAITHGGE). Positions 99, 102, 105, 109, 138, 141, 144, and 148 each coordinate [4Fe-4S] cluster.

Belongs to the complex I 23 kDa subunit family. In terms of assembly, NDH-1 is composed of 14 different subunits. Subunits NuoA, H, J, K, L, M, N constitute the membrane sector of the complex. The cofactor is [4Fe-4S] cluster.

The protein localises to the cell inner membrane. The catalysed reaction is a quinone + NADH + 5 H(+)(in) = a quinol + NAD(+) + 4 H(+)(out). In terms of biological role, NDH-1 shuttles electrons from NADH, via FMN and iron-sulfur (Fe-S) centers, to quinones in the respiratory chain. The immediate electron acceptor for the enzyme in this species is believed to be ubiquinone. Couples the redox reaction to proton translocation (for every two electrons transferred, four hydrogen ions are translocated across the cytoplasmic membrane), and thus conserves the redox energy in a proton gradient. This Sulfurimonas denitrificans (strain ATCC 33889 / DSM 1251) (Thiomicrospira denitrificans (strain ATCC 33889 / DSM 1251)) protein is NADH-quinone oxidoreductase subunit I.